The sequence spans 88 residues: Apolipoprotein C-I (88 aa).

The N-terminal stretch at 1 to 26 (MRLILSLPVLAVVLAMVLEGPAPAQA) is a signal peptide.

Belongs to the apolipoprotein C1 family.

The protein localises to the secreted. In terms of biological role, inhibitor of lipoprotein binding to the low density lipoprotein (LDL) receptor, LDL receptor-related protein, and very low density lipoprotein (VLDL) receptor. Associates with high density lipoproteins (HDL) and the triacylglycerol-rich lipoproteins in the plasma and makes up about 10% of the protein of the VLDL and 2% of that of HDL. Appears to interfere directly with fatty acid uptake and is also the major plasma inhibitor of cholesteryl ester transfer protein (CETP). Binds free fatty acids and reduces their intracellular esterification. Modulates the interaction of APOE with beta-migrating VLDL and inhibits binding of beta-VLDL to the LDL receptor-related protein. The protein is Apolipoprotein C-I (APOC1) of Eidolon helvum (Straw-colored fruit bat).